The primary structure comprises 508 residues: Flavonoid 3'-monooxygenase CYP75B137 (508 aa).

The helical transmembrane segment at 2-22 (LTFFFLWISTLLLSSFIVYLL) threads the bilayer. Cys-445 serves as a coordination point for heme.

The protein belongs to the cytochrome P450 family. The cofactor is heme. Expressed in young cromes.

It is found in the membrane. It catalyses the reaction a 3'-unsubstituted flavone + reduced [NADPH--hemoprotein reductase] + O2 = a 3'-hydroxyflavone + oxidized [NADPH--hemoprotein reductase] + H2O + H(+). The catalysed reaction is (2S)-naringenin + reduced [NADPH--hemoprotein reductase] + O2 = (S)-eriodictyol + oxidized [NADPH--hemoprotein reductase] + H2O + H(+). The enzyme catalyses (2R,3R)-dihydrokaempferol + reduced [NADPH--hemoprotein reductase] + O2 = (2R,3R)-dihydroquercetin + oxidized [NADPH--hemoprotein reductase] + H2O + H(+). It carries out the reaction kaempferol + reduced [NADPH--hemoprotein reductase] + O2 = quercetin + oxidized [NADPH--hemoprotein reductase] + H2O + H(+). The protein operates within flavonoid metabolism. Its function is as follows. Flavonoid 3'-hydroxylase that catalyzes the 3'-hydroxylation of flavanones, dihydroflavonols and flavonols. Converts narigenin to eriodictyol, dihydrokaempferol to dihydroquercetin and kaempferol to quercetin. In Crocosmia x crocosmiiflora (Montbretia), this protein is Flavonoid 3'-monooxygenase CYP75B137.